We begin with the raw amino-acid sequence, 123 residues long: uncharacterized protein (123 aa).

2 consecutive transmembrane segments (helical) span residues 53-73 (VWFLFLFFIASHINILFFFFL) and 75-95 (VLWFLWCYLCSGLFLFDVFSH).

The protein resides in the membrane. This is an uncharacterized protein from Saccharomyces cerevisiae (strain ATCC 204508 / S288c) (Baker's yeast).